The sequence spans 192 residues: Transcription termination/antitermination protein NusG (192 aa).

This sequence belongs to the NusG family.

In terms of biological role, participates in transcription elongation, termination and antitermination. In Rickettsia prowazekii (strain Madrid E), this protein is Transcription termination/antitermination protein NusG.